We begin with the raw amino-acid sequence, 104 residues long: Large ribosomal subunit protein uL24 (104 aa).

The protein belongs to the universal ribosomal protein uL24 family. Part of the 50S ribosomal subunit.

One of two assembly initiator proteins, it binds directly to the 5'-end of the 23S rRNA, where it nucleates assembly of the 50S subunit. Its function is as follows. One of the proteins that surrounds the polypeptide exit tunnel on the outside of the subunit. This Buchnera aphidicola subsp. Baizongia pistaciae (strain Bp) protein is Large ribosomal subunit protein uL24.